The following is a 443-amino-acid chain: Probable glycine dehydrogenase (decarboxylating) subunit 1 (443 aa).

This sequence belongs to the GcvP family. N-terminal subunit subfamily. In terms of assembly, the glycine cleavage system is composed of four proteins: P, T, L and H. In this organism, the P 'protein' is a heterodimer of two subunits.

The enzyme catalyses N(6)-[(R)-lipoyl]-L-lysyl-[glycine-cleavage complex H protein] + glycine + H(+) = N(6)-[(R)-S(8)-aminomethyldihydrolipoyl]-L-lysyl-[glycine-cleavage complex H protein] + CO2. Its function is as follows. The glycine cleavage system catalyzes the degradation of glycine. The P protein binds the alpha-amino group of glycine through its pyridoxal phosphate cofactor; CO(2) is released and the remaining methylamine moiety is then transferred to the lipoamide cofactor of the H protein. This Nitratidesulfovibrio vulgaris (strain ATCC 29579 / DSM 644 / CCUG 34227 / NCIMB 8303 / VKM B-1760 / Hildenborough) (Desulfovibrio vulgaris) protein is Probable glycine dehydrogenase (decarboxylating) subunit 1.